Reading from the N-terminus, the 565-residue chain is Probable alpha-L-arabinofuranosidase A (565 aa).

Positions 1-19 (MPLSAAIKSSLSVSVRADA) are cleaved as a signal peptide. Residues Asn-71, Asn-91, Asn-128, Asn-303, Asn-362, Asn-486, and Asn-501 are each glycosylated (N-linked (GlcNAc...) asparagine).

It belongs to the glycosyl hydrolase 51 family.

It localises to the secreted. It catalyses the reaction Hydrolysis of terminal non-reducing alpha-L-arabinofuranoside residues in alpha-L-arabinosides.. It participates in glycan metabolism; L-arabinan degradation. Functionally, alpha-L-arabinofuranosidase involved in the degradation of arabinoxylan, a major component of plant hemicellulose. Acts only on small linear 1,5-alpha-linked L-arabinofuranosyl oligosaccharides. This is Probable alpha-L-arabinofuranosidase A (abfA) from Emericella nidulans (strain FGSC A4 / ATCC 38163 / CBS 112.46 / NRRL 194 / M139) (Aspergillus nidulans).